An 873-amino-acid chain; its full sequence is Valine--tRNA ligase (873 aa).

The 'HIGH' region motif lies at 46–56 (PNVTGKLHIGH). The 'KMSKS' region motif lies at 525–529 (KMSKS). Lysine 528 is a binding site for ATP. Positions 804 to 873 (NDDFIDKEKM…ELIQDKLNKM (70 aa)) form a coiled coil.

This sequence belongs to the class-I aminoacyl-tRNA synthetase family. ValS type 1 subfamily. As to quaternary structure, monomer.

The protein resides in the cytoplasm. The catalysed reaction is tRNA(Val) + L-valine + ATP = L-valyl-tRNA(Val) + AMP + diphosphate. Functionally, catalyzes the attachment of valine to tRNA(Val). As ValRS can inadvertently accommodate and process structurally similar amino acids such as threonine, to avoid such errors, it has a 'posttransfer' editing activity that hydrolyzes mischarged Thr-tRNA(Val) in a tRNA-dependent manner. The chain is Valine--tRNA ligase from Mesoplasma florum (strain ATCC 33453 / NBRC 100688 / NCTC 11704 / L1) (Acholeplasma florum).